The sequence spans 320 residues: NADH-ubiquinone oxidoreductase chain 1 (320 aa).

Helical transmembrane passes span 3–23 (LITI…VAFL), 72–92 (ILLI…WTPI), 103–123 (LGFL…LWAG), 147–167 (VTLG…TMQL), 174–194 (HIWL…STLA), 226–246 (FFLA…ILFI), 255–275 (ELFL…FLWI), and 295–315 (FLPL…SISG).

The protein belongs to the complex I subunit 1 family.

It localises to the mitochondrion inner membrane. The catalysed reaction is a ubiquinone + NADH + 5 H(+)(in) = a ubiquinol + NAD(+) + 4 H(+)(out). Functionally, core subunit of the mitochondrial membrane respiratory chain NADH dehydrogenase (Complex I) that is believed to belong to the minimal assembly required for catalysis. Complex I functions in the transfer of electrons from NADH to the respiratory chain. The immediate electron acceptor for the enzyme is believed to be ubiquinone. The protein is NADH-ubiquinone oxidoreductase chain 1 (MT-ND1) of Varanus jobiensis (Peach throat monitor).